A 186-amino-acid chain; its full sequence is Ribosome-recycling factor (186 aa).

It belongs to the RRF family.

It is found in the cytoplasm. In terms of biological role, responsible for the release of ribosomes from messenger RNA at the termination of protein biosynthesis. May increase the efficiency of translation by recycling ribosomes from one round of translation to another. The polypeptide is Ribosome-recycling factor (Brucella melitensis biotype 2 (strain ATCC 23457)).